A 126-amino-acid chain; its full sequence is MKIIATLDAPAAIGPYVQGKIVNGLLYASGQIPLNPLNGEIVGDSIETQTEQVMKNISAILKEAHSDFDLVIKTTCFLKNIEDFSRFNAIYSKFFDKEFPARSAVGVAGLPKNVLIEIEVIAEVKS.

It belongs to the RutC family.

Functionally, implicated in the regulation of isoleucine biosynthesis. This chain is Putative regulator AldR (aldR), found in Lactococcus lactis subsp. lactis (strain IL1403) (Streptococcus lactis).